The following is a 406-amino-acid chain: uncharacterized protein (406 aa).

A run of 5 helical transmembrane segments spans residues 7–27 (LCTN…YYLF), 31–51 (YFNI…YGSV), 65–85 (LIFI…SEII), 92–112 (IFYF…SFIL), and 191–211 (ISLI…SSFF). Residues 259 to 331 (TLNVPISTNN…TGTNNNVVDN (73 aa)) form a disordered region. Positions 262-291 (VPISTNNTDNLNSVKTNQQFNTPVAKSNTK) are enriched in polar residues. The span at 292–303 (SNRRKKTGKKIR) shows a compositional bias: basic residues. The span at 306–318 (NQTTSSNSSNNQS) shows a compositional bias: low complexity. The segment covering 319–330 (PESTGTNNNVVD) has biased composition (polar residues).

The protein localises to the membrane. This is an uncharacterized protein from Acanthamoeba polyphaga (Amoeba).